A 686-amino-acid chain; its full sequence is Hexamerin 70c (686 aa).

A signal peptide spans 1–19 (MLSKVVLLVALAAICGAQG). One can recognise a Hemocyanin N-terminal domain in the interval 32–155 (FLHKQKKIFD…IAVLYRPDTK (124 aa)). Positions 161–431 (AIYEIYPNYF…MLYQNILSYF (271 aa)) constitute a Hemocyanin middle domain. N-linked (GlcNAc...) asparagine glycans are attached at residues asparagine 205 and asparagine 662. Residues 440 to 676 (QYSQSELQMP…NMYFKDVFIY (237 aa)) form the Hemocyanin C-terminal domain.

This sequence belongs to the hemocyanin/hexamerin family. Probable homohexamer. In terms of tissue distribution, expressed in the fat body and secreted into the hemolymph (at protein level). Present in trophocytes and oenocytes of the fat body (at protein level). Not expressed in ovary or testis.

The protein resides in the secreted. The protein localises to the nucleus. It is found in the cytoplasm. It localises to the cytoplasmic granule. Functionally, storage protein that may function as a nutrient supply to compensate for lack of dietary proteins during metamorphosis and egg production. This is Hexamerin 70c from Apis mellifera (Honeybee).